Here is a 166-residue protein sequence, read N- to C-terminus: 6,7-dimethyl-8-ribityllumazine synthase (166 aa).

5-amino-6-(D-ribitylamino)uracil-binding positions include Phe22, 56 to 58 (SME), and 80 to 82 (AVI). 85-86 (ET) is a (2S)-2-hydroxy-3-oxobutyl phosphate binding site. His88 serves as the catalytic Proton donor. Phe113 is a binding site for 5-amino-6-(D-ribitylamino)uracil. (2S)-2-hydroxy-3-oxobutyl phosphate is bound at residue Arg127.

Belongs to the DMRL synthase family.

The enzyme catalyses (2S)-2-hydroxy-3-oxobutyl phosphate + 5-amino-6-(D-ribitylamino)uracil = 6,7-dimethyl-8-(1-D-ribityl)lumazine + phosphate + 2 H2O + H(+). Its pathway is cofactor biosynthesis; riboflavin biosynthesis; riboflavin from 2-hydroxy-3-oxobutyl phosphate and 5-amino-6-(D-ribitylamino)uracil: step 1/2. Functionally, catalyzes the formation of 6,7-dimethyl-8-ribityllumazine by condensation of 5-amino-6-(D-ribitylamino)uracil with 3,4-dihydroxy-2-butanone 4-phosphate. This is the penultimate step in the biosynthesis of riboflavin. The polypeptide is 6,7-dimethyl-8-ribityllumazine synthase (Thermotoga neapolitana (strain ATCC 49049 / DSM 4359 / NBRC 107923 / NS-E)).